The chain runs to 427 residues: Trigger factor (427 aa).

Residues 163-248 (GDTVILDFEG…LHEIKTKEVP (86 aa)) form the PPIase FKBP-type domain.

This sequence belongs to the FKBP-type PPIase family. Tig subfamily.

It localises to the cytoplasm. It catalyses the reaction [protein]-peptidylproline (omega=180) = [protein]-peptidylproline (omega=0). Its function is as follows. Involved in protein export. Acts as a chaperone by maintaining the newly synthesized protein in an open conformation. Functions as a peptidyl-prolyl cis-trans isomerase. This chain is Trigger factor, found in Listeria innocua serovar 6a (strain ATCC BAA-680 / CLIP 11262).